A 412-amino-acid chain; its full sequence is Multifunctional CCA protein (412 aa).

ATP is bound by residues Gly-8 and Arg-11. CTP-binding residues include Gly-8 and Arg-11. Positions 21 and 23 each coordinate Mg(2+). ATP contacts are provided by Arg-91, Arg-137, and Arg-140. Residues Arg-91, Arg-137, and Arg-140 each contribute to the CTP site. The HD domain occupies 228–329 (TGIHTLMTLS…VKLFDSIDAW (102 aa)).

Belongs to the tRNA nucleotidyltransferase/poly(A) polymerase family. Bacterial CCA-adding enzyme type 1 subfamily. As to quaternary structure, monomer. Can also form homodimers and oligomers. It depends on Mg(2+) as a cofactor. Ni(2+) serves as cofactor.

It carries out the reaction a tRNA precursor + 2 CTP + ATP = a tRNA with a 3' CCA end + 3 diphosphate. The enzyme catalyses a tRNA with a 3' CCA end + 2 CTP + ATP = a tRNA with a 3' CCACCA end + 3 diphosphate. Its function is as follows. Catalyzes the addition and repair of the essential 3'-terminal CCA sequence in tRNAs without using a nucleic acid template. Adds these three nucleotides in the order of C, C, and A to the tRNA nucleotide-73, using CTP and ATP as substrates and producing inorganic pyrophosphate. tRNA 3'-terminal CCA addition is required both for tRNA processing and repair. Also involved in tRNA surveillance by mediating tandem CCA addition to generate a CCACCA at the 3' terminus of unstable tRNAs. While stable tRNAs receive only 3'-terminal CCA, unstable tRNAs are marked with CCACCA and rapidly degraded. This is Multifunctional CCA protein from Escherichia coli O127:H6 (strain E2348/69 / EPEC).